The chain runs to 303 residues: Agmatinase (303 aa).

6 residues coordinate Mn(2+): His126, Asp149, His151, Asp153, Asp230, and Asp232.

This sequence belongs to the arginase family. Agmatinase subfamily. The cofactor is Mn(2+).

It carries out the reaction agmatine + H2O = urea + putrescine. In terms of biological role, catalyzes the formation of putrescine from agmatine. This chain is Agmatinase (speB), found in Blochmanniella floridana.